A 22-amino-acid polypeptide reads, in one-letter code: Dioicin-1 (22 aa).

The protein localises to the secreted. It localises to the extracellular space. The protein resides in the golgi apparatus. It is found in the vacuole. It catalyses the reaction Endohydrolysis of the N-glycosidic bond at one specific adenosine on the 28S rRNA.. Nicks pBR322 dsDNA. Has adenine polynucleotide glycosidase activity on herring sperm ssDNA. The polypeptide is Dioicin-1 (Phytolacca dioica (Bella sombra tree)).